The primary structure comprises 284 residues: tRNA-cytidine(32) 2-sulfurtransferase (284 aa).

The PP-loop motif motif lies at 44 to 49; it reads SGGKDS. The [4Fe-4S] cluster site is built by Cys-119, Cys-122, and Cys-210.

It belongs to the TtcA family. Homodimer. Mg(2+) is required as a cofactor. Requires [4Fe-4S] cluster as cofactor.

The protein localises to the cytoplasm. The catalysed reaction is cytidine(32) in tRNA + S-sulfanyl-L-cysteinyl-[cysteine desulfurase] + AH2 + ATP = 2-thiocytidine(32) in tRNA + L-cysteinyl-[cysteine desulfurase] + A + AMP + diphosphate + H(+). It functions in the pathway tRNA modification. Its function is as follows. Catalyzes the ATP-dependent 2-thiolation of cytidine in position 32 of tRNA, to form 2-thiocytidine (s(2)C32). The sulfur atoms are provided by the cysteine/cysteine desulfurase (IscS) system. The chain is tRNA-cytidine(32) 2-sulfurtransferase from Chromohalobacter salexigens (strain ATCC BAA-138 / DSM 3043 / CIP 106854 / NCIMB 13768 / 1H11).